The primary structure comprises 240 residues: Nudix hydrolase 3 (240 aa).

The 141-residue stretch at 50 to 190 (NSAMSVLIPL…RMKYTLPSFD (141 aa)) folds into the Nudix hydrolase domain. Residues 89-110 (GRMDPGETTTETALRETFEEIG) carry the Nudix box motif. The Mg(2+) site is built by E104 and E108.

The protein belongs to the Nudix hydrolase family. PCD1 subfamily. Mn(2+) is required as a cofactor. Requires Mg(2+) as cofactor.

Functionally, probably mediates the hydrolysis of some nucleoside diphosphate derivatives. This is Nudix hydrolase 3 (ndx-3) from Caenorhabditis elegans.